The chain runs to 596 residues: F-box/WD repeat-containing protein 8 (596 aa).

Met1 bears the N-acetylmethionine mark. Positions 21-95 are disordered; sequence QVLRRRRRLE…PDRDAAEPEP (75 aa). Basic and acidic residues predominate over residues 29–43; that stretch reads LEAGERRPRRPEAGA. Residues 44–64 are compositionally biased toward low complexity; sequence RGEPASGYLGLAQGLLEGAGR. A compositionally biased stretch (basic and acidic residues) spans 71–91; the sequence is GRTDRKDVSSRSRSPPDRDAA. Residues Ser82 and Ser84 each carry the phosphoserine modification. The F-box domain maps to 111–157; sequence PFFDVHLPYELAINIFQYLNRRELGLCAQVSKTWKVIAEDEVLWYRL. WD repeat units follow at residues 199 to 248, 257 to 297, 298 to 338, 339 to 381, 382 to 427, 428 to 473, 474 to 511, and 512 to 559; these read AVSE…LESE, QPYV…FEHD, ARIQ…SEFE, VQKL…LHYV, YGQP…SKLG, NALG…SAHQ, LGVSAVQMDDWKIVSGGEEGLVSVWDYRMNQKLWEVHS, and RHPV…AYEF.

In terms of assembly, component of the Cul7-RING(FBXW8) complex consisting of CUL7, RBX1, SKP1 and FBXW8; within the complex interacts with CUL7 and SKP1. Interacts with GLMN isoform 1. Interacts with OBSL1, CUL1, CUL2, CCT6B, PFDN5, CCT2, CCT3, CCT6A, CCT7, VBP1, CCDC8, ARF1, TRIP13, PDCD5 and GORASP1. Interacts with MAP4K1/HPK1 (when autophosphorylated). Associated component of the 3M complex. Interacts with POUF51 (when phosphorylated on 'Ser-347'). In terms of processing, phosphorylation at Ser-84 by mTORC2 promotes FBXW8 stabilization, allowing its translocation to the cytosol in response to insulin. In terms of tissue distribution, expressed in placenta and embryonic brain (at protein level).

The protein resides in the cytoplasm. The protein localises to the perinuclear region. It is found in the golgi apparatus. It localises to the cytosol. The protein operates within protein modification; protein ubiquitination. In terms of biological role, substrate-recognition component of the Cul7-RING(FBXW8) ubiquitin ligase complex, which mediates the ubiquitination and subsequent proteasomal degradation of target proteins. The Cul7-RING(FBXW8) complex mediates ubiquitination and consequent degradation of GORASP1, acting as a component of the ubiquitin ligase pathway that regulates Golgi morphogenesis and dendrite patterning in brain. Mediates ubiquitination and degradation of IRS1 in a mTOR-dependent manner: the Cul7-RING(FBXW8) complex recognizes and binds IRS1 previously phosphorylated by S6 kinase (RPS6KB1 or RPS6KB2). The Cul7-RING(FBXW8) complex also mediates ubiquitination of MAP4K1/HPK1: recognizes and binds autophosphorylated MAP4K1/HPK1, leading to its degradation, thereby affecting cell proliferation and differentiation. The Cul7-RING(FBXW8) complex also mediates ubiquitination of phosphorylated cyclin-D1 (CCND1). The Cul7-RING(FBXW8) complex is however not a major regulator of CCND1 stability during the G1/S transition. Associated component of the 3M complex, suggesting that it mediates some of 3M complex functions. The chain is F-box/WD repeat-containing protein 8 (Fbxw8) from Rattus norvegicus (Rat).